We begin with the raw amino-acid sequence, 292 residues long: AKT-interacting protein homolog B (292 aa).

Residues 1–44 form a disordered region; it reads MNPFWNMPSASVRKRSDNDEKIATADQKISPARSSSAKKQLPSI. A compositionally biased stretch (basic and acidic residues) spans 14–23; that stretch reads KRSDNDEKIA. Positions 75 to 223 constitute a UBC core domain; it reads YLEYSLLAEF…VVDSVKLCNS (149 aa).

The protein belongs to the ubiquitin-conjugating enzyme family. FTS subfamily.

It localises to the cytoplasm. The protein resides in the cell membrane. Its function is as follows. May function to promote vesicle trafficking and/or fusion. May also regulate apoptosis. In Xenopus laevis (African clawed frog), this protein is AKT-interacting protein homolog B (aktip-b).